Reading from the N-terminus, the 138-residue chain is Isochorismatase-like protein asqB (138 aa).

Belongs to the isochorismatase family.

It carries out the reaction [(1'E)-5'-(3',3'-dimethyloxiran-2'-yl)-3'-hydroxy-3'-methylpent-1'-en-1'-yl]-quinolinone B = yaequinolone C. The protein operates within secondary metabolite biosynthesis. It functions in the pathway alkaloid biosynthesis. Its pathway is mycotoxin biosynthesis. Its function is as follows. Isochorismatase-like protein; part of the gene cluster that mediates the biosynthesis of the aspoquinolone mycotoxins. Within the pathway, asqB converts [(1'E)-5'-(3',3'-dimethyloxiran-2'-yl)-3'-hydroxy-3'-methylpent-1'-en-1'-yl]-quinolinone B into yaequinolone C. The first step of the pathway is catalyzed by the nonribosomal peptide synthetase asqK that condenses anthranilic acid and O-methyl-L-tyrosine to produce 4'-methoxycyclopeptin. 4'-methoxycyclopeptin is then converted to 4'-methoxydehydrocyclopeptin by the ketoglutarate-dependent dioxygenase asqJ. AsqJ also converts its first product 4'-methoxydehydrocyclopeptin to 4'-methoxycyclopenin. The following conversion of 4'-methoxycyclopenin into 4'-methoxyviridicatin is catalyzed by the cyclopenase asqI. 4'-methoxyviridicatin is the precursor of quinolone natural products, and is further converted to quinolinone B. The prenyltransferase asqH1 then catalyzes the canonical Friedel-Crafts alkylation of quinolinone B with dimethylallyl cation to yield dimethylallyl quinolone, which is subjected to FAD-dependent dehydrogenation by the FAD-linked oxidoreductase asqF to yield conjugated aryl diene. The delta(3') double bond then serves as the site of the second alkylation with DMAPP catalyzed by the prenyltransferase asqH2 to yield a carbenium ion intermediate, which can be attacked by H(2)O to yield a styrenyl quinolone containing a C3'-hydroxyprenyl chain. The FAD-dependent monooxygenase asqG performs epoxidation of the terminal C7'-C8' olefin. Finally, after dehydratation of the epoxide at C3 by asqC, the quinolone epoxide rearrangement protein asqO catalyzes an enzymatic 3-exo-tet cyclization to yield the cyclopropyl-THF ring system in aspoquinolone. This chain is Isochorismatase-like protein asqB, found in Emericella nidulans (strain FGSC A4 / ATCC 38163 / CBS 112.46 / NRRL 194 / M139) (Aspergillus nidulans).